The primary structure comprises 231 residues: Putative N-acetylmannosamine-6-phosphate 2-epimerase (231 aa).

Belongs to the NanE family.

It catalyses the reaction an N-acyl-D-glucosamine 6-phosphate = an N-acyl-D-mannosamine 6-phosphate. It functions in the pathway amino-sugar metabolism; N-acetylneuraminate degradation; D-fructose 6-phosphate from N-acetylneuraminate: step 3/5. Its function is as follows. Converts N-acetylmannosamine-6-phosphate (ManNAc-6-P) to N-acetylglucosamine-6-phosphate (GlcNAc-6-P). This chain is Putative N-acetylmannosamine-6-phosphate 2-epimerase, found in Listeria innocua serovar 6a (strain ATCC BAA-680 / CLIP 11262).